The following is a 227-amino-acid chain: 2,3-bisphosphoglycerate-dependent phosphoglycerate mutase (227 aa).

Substrate is bound by residues Arg-7–Asn-14, Thr-20–Gly-21, Arg-59, Glu-86–Tyr-89, Lys-97, Arg-113–Arg-114, and Gly-182–Asn-183. His-8 serves as the catalytic Tele-phosphohistidine intermediate. Glu-86 functions as the Proton donor/acceptor in the catalytic mechanism.

This sequence belongs to the phosphoglycerate mutase family. BPG-dependent PGAM subfamily. Homodimer.

The catalysed reaction is (2R)-2-phosphoglycerate = (2R)-3-phosphoglycerate. Its pathway is carbohydrate degradation; glycolysis; pyruvate from D-glyceraldehyde 3-phosphate: step 3/5. Its function is as follows. Catalyzes the interconversion of 2-phosphoglycerate and 3-phosphoglycerate. This Neisseria meningitidis serogroup B (strain ATCC BAA-335 / MC58) protein is 2,3-bisphosphoglycerate-dependent phosphoglycerate mutase.